The sequence spans 179 residues: tRNA (cytidine(56)-2'-O)-methyltransferase (179 aa).

Residues Leu82, 112 to 116, and 130 to 137 each bind S-adenosyl-L-methionine; these read GAEKV and VGNQPHSE.

The protein belongs to the aTrm56 family. In terms of assembly, homodimer.

It is found in the cytoplasm. It catalyses the reaction cytidine(56) in tRNA + S-adenosyl-L-methionine = 2'-O-methylcytidine(56) in tRNA + S-adenosyl-L-homocysteine + H(+). Its function is as follows. Specifically catalyzes the AdoMet-dependent 2'-O-ribose methylation of cytidine at position 56 in tRNAs. The protein is tRNA (cytidine(56)-2'-O)-methyltransferase of Methanococcus maripaludis (strain C6 / ATCC BAA-1332).